Reading from the N-terminus, the 775-residue chain is Coiled-coil domain-containing protein 33 (775 aa).

2 disordered regions span residues methionine 1–tyrosine 23 and glutamate 68–alanine 87. Basic and acidic residues predominate over residues lysine 7–threonine 18. One can recognise a C2 domain in the interval proline 12 to leucine 141. Positions asparagine 71–proline 84 are enriched in polar residues. 2 coiled-coil regions span residues valine 414–glutamate 561 and aspartate 672–glutamine 715. The disordered stretch occupies residues arginine 735 to arginine 775.

The polypeptide is Coiled-coil domain-containing protein 33 (Ccdc33) (Rattus norvegicus (Rat)).